We begin with the raw amino-acid sequence, 438 residues long: Shikimate transporter (438 aa).

Helical transmembrane passes span 28–48, 64–84, 109–129, 133–153, 168–188, 193–213, 255–275, 287–307, 318–337, 341–363, 387–407, and 411–431; these read FAGAVVDWYDFLLYGITAALV, LAAFATFGVGFLFRPLGGVIF, ALIGILPSFSTIGWWAPILLV, AIQGFAVGGEWGGAALLSVES, VGYGVGLLLSTGLVSLISMMT, FLSWGWRIPFLFSIVLVLGAL, IIALRLCELLTMYIVTAFALN, LFLNIGLLVGGLSCLTIPCFA, VYITGTLIGTLSAFPFFMAL, SIFWIVFFSIMLANIAHDMVVCV, VASVVGGGFTPFIAAALITYF, and WHSVAIYLLAGCLISAMTALL.

It belongs to the major facilitator superfamily. Metabolite:H+ Symporter (MHS) family (TC 2.A.1.6) family.

The protein localises to the cell inner membrane. It carries out the reaction shikimate(in) + H(+)(in) = shikimate(out) + H(+)(out). Functionally, involved in the uptake of shikimate, an intermediate in the aromatic amino acid biosynthetic pathway. The sequence is that of Shikimate transporter from Escherichia coli (strain K12).